A 263-amino-acid chain; its full sequence is MAELSTPSPASPAPLDGGRGDELEKFTLRGARQILQLLQDLITHRGLITAHTGGGHSFMTAVLKVDEERGRVVLDPSPDPQANRRALAAPRLTCVTQLDGIRIQFPLVGLGEGQDKGRPALFAPLPAEMLRLQRREFYRLQVPLAHELSCLLKAEDLARKPVEVSARVIDIGAGGVAVVVPTGAAEFVIGGTLPACRLALPDGEPIELDLEVRNLNRQTQRNGTEQLRVGLRFAALPRAADTRIQRYIFKTERALNAKARGGL.

The tract at residues 1–21 is disordered; the sequence is MAELSTPSPASPAPLDGGRGD. The region spanning 133 to 250 is the PilZ domain; that stretch reads QRREFYRLQV…DTRIQRYIFK (118 aa).

Belongs to the YcgR family. In terms of assembly, monomer. Interacts with the flagellar basal bodies.

Its subcellular location is the bacterial flagellum basal body. Acts as a flagellar brake, regulating swimming and swarming in a bis-(3'-5') cyclic diguanylic acid (c-di-GMP)-dependent manner. Binds 1 c-di-GMP dimer per subunit. Increasing levels of c-di-GMP lead to decreased motility. This chain is Flagellar brake protein YcgR, found in Thauera aminoaromatica.